The sequence spans 228 residues: 5'(3')-deoxyribonucleotidase, mitochondrial (228 aa).

The transit peptide at 1-31 directs the protein to the mitochondrion; sequence MIRLGGWCARRLCSAAVPAGRRGAAGGLGLA. Catalysis depends on Asp41, which acts as the Nucleophile. Mg(2+) is bound by residues Asp41 and Asp43. The active-site Proton donor is Asp43. Substrate-binding residues include Asp43, Phe49, Phe75, Trp76, Val77, Trp96, Thr130, and Lys165. Asp176 serves as a coordination point for Mg(2+).

This sequence belongs to the 5'(3')-deoxyribonucleotidase family. As to quaternary structure, homodimer. The cofactor is Mg(2+). As to expression, highly expressed in heart, brain and skeletal muscle. Detected at very low levels in kidney and pancreas.

The protein resides in the mitochondrion. Its function is as follows. Dephosphorylates specifically the 5' and 2'(3')-phosphates of uracil and thymine deoxyribonucleotides, and so protects mitochondrial DNA replication from excess dTTP. Has only marginal activity towards dIMP and dGMP. The chain is 5'(3')-deoxyribonucleotidase, mitochondrial (NT5M) from Homo sapiens (Human).